The following is a 775-amino-acid chain: MASLIYRQLLTNSYTVELSDEIKTIGSEKSQNVTINPGPFAQTTYAPVTWRHGEVNDSTTVEPVLDGPYQPTSFKPPNDYWILLNPINKGVVFKGTNRTDVWVAILLIEQRVPSQDRQYTLFGEVKQITVENSSDKWKFFEMFRNNANIDFQLQRPLTSDTKLAGFLTHGGRVWTFNGETPHATTDYSTTSNLPDVEVVIHTEFYIIPRSQESKCNEYINTGLPPMQNTRNVVPVALSSRSITYQRAQVNEDIIISKTSLWKEMQYNRDITIRFKFGNSIVKLGGLGYKWSEVSFKAANYQYNYLRDGEQVTAHTTCSVNGVNNFSYNGGSLPTDFSVSRYELIKENSYVYIDYWDDSQAFKNMVYVRSLAANLNSVKCSGGNYNFKIPVGAWPVMSGGAVSLHFAGVTLSTQFTNFVSLNSLRFRFSLTVEEPSFSILRTRVSGLYGLPAANPNNGNEYYEIAGRFSLILLVPSNDDYQTPIMNSVTVRQDLERQLGDLREEFNSLSQEIAMTQLIDLALLPLDMFSMFSGIKSTIDVAKSMATNVMKKFKKSGLATSISELTGSLPSAASSVSRSSSIRSNISSISVWTDVSEQIADASNSVRSISTQTSAISKRLRLREITTQTEGMNFDDISAAVLKTPLDKSTHISPDTLPDIITESSEKFIPKRAYRVLKNDEVMEADVDGKFFAYRVDTFEEVPFDVDKFVNLATASPVISAIIDFKTLKNLNDNYGITRSQALDLIRSDPRVLRDFINQNNPIIKNRIEQLILQCRL.

The segment at 65–223 (LDGPYQPTSF…KCNEYINTGL (159 aa)) is spike head. Residues 247-478 (AQVNEDIIIS…LILLVPSNDD (232 aa)) form a spike body and stalk (antigen domain) region. A DGE motif; interaction with ITGA2/ITGB1 heterodimer motif is present at residues 307 to 309 (DGE). A disulfide bridge links Cys317 with Cys379. The tract at residues 388-408 (IPVGAWPVMSGGAVSLHFAGV) is hydrophobic; possible role in virus entry into host cell. The YGL motif; interaction with ITGA4 signature appears at 447 to 449 (YGL). A coiled-coil region spans residues 483 to 515 (IMNSVTVRQDLERQLGDLREEFNSLSQEIAMTQ). Residues 509-775 (QEIAMTQLID…IEQLILQCRL (267 aa)) are spike foot.

It belongs to the rotavirus VP4 family. In terms of assembly, homotrimer. VP4 adopts a dimeric appearance above the capsid surface, while forming a trimeric base anchored inside the capsid layer. Only hints of the third molecule are observed above the capsid surface. It probably performs a series of molecular rearrangements during viral entry. Prior to trypsin cleavage, it is flexible. The priming trypsin cleavage triggers its rearrangement into rigid spikes with approximate two-fold symmetry of their protruding parts. After an unknown second triggering event, cleaved VP4 may undergo another rearrangement, in which two VP5* subunits fold back on themselves and join a third subunit to form a tightly associated trimer, shaped like a folded umbrella. Interacts with VP6. Interacts with VP7. Homotrimer. The trimer is coiled-coil stabilized by its C-terminus, however, its N-terminus, known as antigen domain or 'body', seems to be flexible allowing it to self-associate either as a dimer or a trimer. In terms of processing, proteolytic cleavage by trypsin results in activation of VP4 functions and greatly increases infectivity. The penetration into the host cell is dependent on trypsin treatment of VP4. It produces two peptides, VP5* and VP8* that remain associated with the virion. Cleavage of VP4 by trypsin probably occurs in vivo in the lumen of the intestine prior to infection of enterocytes. Trypsin seems to be incorporated into the three-layered viral particles but remains inactive as long as the viral outer capsid is intact and would only be activated upon the solubilization of the latter.

It is found in the virion. The protein resides in the host rough endoplasmic reticulum. The protein localises to the host cell membrane. It localises to the host cytoplasm. Its subcellular location is the host cytoskeleton. It is found in the host endoplasmic reticulum-Golgi intermediate compartment. Spike-forming protein that mediates virion attachment to the host epithelial cell receptors and plays a major role in cell penetration, determination of host range restriction and virulence. Rotavirus attachment and entry into the host cell probably involves multiple sequential contacts between the outer capsid proteins VP4 and VP7, and the cell receptors. It is subsequently lost, together with VP7, following virus entry into the host cell. Following entry into the host cell, low intracellular or intravesicular Ca(2+) concentration probably causes the calcium-stabilized VP7 trimers to dissociate from the virion. This step is probably necessary for the membrane-disrupting entry step and the release of VP4, which is locked onto the virion by VP7. During the virus exit from the host cell, VP4 seems to be required to target the newly formed virions to the host cell lipid rafts. Its function is as follows. Forms the spike 'foot' and 'body' and acts as a membrane permeabilization protein that mediates release of viral particles from endosomal compartments into the cytoplasm. During entry, the part of VP5* that protrudes from the virus folds back on itself and reorganizes from a local dimer to a trimer. This reorganization may be linked to membrane penetration by exposing VP5* hydrophobic region. In integrin-dependent strains, VP5* targets the integrin heterodimer ITGA2/ITGB1 for cell attachment. In terms of biological role, forms the head of the spikes and mediates the recognition of specific host cell surface glycans. It is the viral hemagglutinin and an important target of neutralizing antibodies. In sialic acid-dependent strains, VP8* binds to host cell sialic acid, most probably a ganglioside, providing the initial contact. In some other strains, VP8* mediates the attachment to histo-blood group antigens (HBGAs) for viral entry. The polypeptide is Outer capsid protein VP4 (Rotavirus A (strain RVA/Pig/United States/Gottfried/1983/G4P2B[6]) (RV-A)).